Here is a 202-residue protein sequence, read N- to C-terminus: Cytochrome c oxidase assembly protein CtaG (202 aa).

Topologically, residues 1–14 (MTSPANPSEVTRDR) are cytoplasmic. A helical; Signal-anchor for type II membrane protein transmembrane segment spans residues 15-37 (RNRGVAFVCAGVFVAMVGMSFAA). Residues 38-202 (VPLYRLFCQV…GAAKTQKLGG (165 aa)) lie on the Periplasmic side of the membrane.

It belongs to the COX11/CtaG family.

The protein localises to the cell inner membrane. In terms of biological role, exerts its effect at some terminal stage of cytochrome c oxidase synthesis, probably by being involved in the insertion of the copper B into subunit I. This is Cytochrome c oxidase assembly protein CtaG from Chelativorans sp. (strain BNC1).